We begin with the raw amino-acid sequence, 156 residues long: ATP synthase subunit b (156 aa).

Residues 11–31 form a helical membrane-spanning segment; sequence AIAFILFVWFCMKYVWPPLMA.

The protein belongs to the ATPase B chain family. In terms of assembly, F-type ATPases have 2 components, F(1) - the catalytic core - and F(0) - the membrane proton channel. F(1) has five subunits: alpha(3), beta(3), gamma(1), delta(1), epsilon(1). F(0) has three main subunits: a(1), b(2) and c(10-14). The alpha and beta chains form an alternating ring which encloses part of the gamma chain. F(1) is attached to F(0) by a central stalk formed by the gamma and epsilon chains, while a peripheral stalk is formed by the delta and b chains.

It is found in the cell inner membrane. Functionally, f(1)F(0) ATP synthase produces ATP from ADP in the presence of a proton or sodium gradient. F-type ATPases consist of two structural domains, F(1) containing the extramembraneous catalytic core and F(0) containing the membrane proton channel, linked together by a central stalk and a peripheral stalk. During catalysis, ATP synthesis in the catalytic domain of F(1) is coupled via a rotary mechanism of the central stalk subunits to proton translocation. In terms of biological role, component of the F(0) channel, it forms part of the peripheral stalk, linking F(1) to F(0). In Salmonella gallinarum (strain 287/91 / NCTC 13346), this protein is ATP synthase subunit b.